Consider the following 173-residue polypeptide: Crossover junction endodeoxyribonuclease RuvC (173 aa).

Catalysis depends on residues aspartate 8, glutamate 67, and aspartate 139. Aspartate 8, glutamate 67, and aspartate 139 together coordinate Mg(2+).

The protein belongs to the RuvC family. In terms of assembly, homodimer which binds Holliday junction (HJ) DNA. The HJ becomes 2-fold symmetrical on binding to RuvC with unstacked arms; it has a different conformation from HJ DNA in complex with RuvA. In the full resolvosome a probable DNA-RuvA(4)-RuvB(12)-RuvC(2) complex forms which resolves the HJ. The cofactor is Mg(2+).

It localises to the cytoplasm. It catalyses the reaction Endonucleolytic cleavage at a junction such as a reciprocal single-stranded crossover between two homologous DNA duplexes (Holliday junction).. Functionally, the RuvA-RuvB-RuvC complex processes Holliday junction (HJ) DNA during genetic recombination and DNA repair. Endonuclease that resolves HJ intermediates. Cleaves cruciform DNA by making single-stranded nicks across the HJ at symmetrical positions within the homologous arms, yielding a 5'-phosphate and a 3'-hydroxyl group; requires a central core of homology in the junction. The consensus cleavage sequence is 5'-(A/T)TT(C/G)-3'. Cleavage occurs on the 3'-side of the TT dinucleotide at the point of strand exchange. HJ branch migration catalyzed by RuvA-RuvB allows RuvC to scan DNA until it finds its consensus sequence, where it cleaves and resolves the cruciform DNA. The sequence is that of Crossover junction endodeoxyribonuclease RuvC from Salmonella paratyphi C (strain RKS4594).